A 173-amino-acid chain; its full sequence is ATP synthase subunit b (173 aa).

A helical membrane pass occupies residues I18–P38.

Belongs to the ATPase B chain family. In terms of assembly, F-type ATPases have 2 components, F(1) - the catalytic core - and F(0) - the membrane proton channel. F(1) has five subunits: alpha(3), beta(3), gamma(1), delta(1), epsilon(1). F(0) has three main subunits: a(1), b(2) and c(10-14). The alpha and beta chains form an alternating ring which encloses part of the gamma chain. F(1) is attached to F(0) by a central stalk formed by the gamma and epsilon chains, while a peripheral stalk is formed by the delta and b chains.

It localises to the cell membrane. Its function is as follows. F(1)F(0) ATP synthase produces ATP from ADP in the presence of a proton or sodium gradient. F-type ATPases consist of two structural domains, F(1) containing the extramembraneous catalytic core and F(0) containing the membrane proton channel, linked together by a central stalk and a peripheral stalk. During catalysis, ATP synthesis in the catalytic domain of F(1) is coupled via a rotary mechanism of the central stalk subunits to proton translocation. Functionally, component of the F(0) channel, it forms part of the peripheral stalk, linking F(1) to F(0). This chain is ATP synthase subunit b, found in Bifidobacterium adolescentis (strain ATCC 15703 / DSM 20083 / NCTC 11814 / E194a).